A 1608-amino-acid polypeptide reads, in one-letter code: Protein REDUCED CHLOROPLAST COVERAGE 3 (1608 aa).

Residues 1–12 (MAPRSSKGKSNN) are compositionally biased toward basic residues. 2 disordered regions span residues 1–22 (MAPR…KKKR) and 278–303 (VSES…GRNG). Residues 288–564 (EDEHWGGNGG…KKETDVCGKP (277 aa)) form the Clu domain. 4 TPR repeats span residues 848–881 (GRTL…MIAV), 890–923 (ACAY…NERE), 932–965 (MKSY…LHFT), and 974–1007 (AATY…NKRL). Disordered regions lie at residues 1194 to 1226 (VEES…RQPD), 1238 to 1292 (HNRN…ASGA), 1369 to 1400 (KQES…KTSD), 1466 to 1499 (TPRS…VSVD), and 1531 to 1552 (PAAL…KDSA). The Nuclear localization signal motif lies at 1217 to 1224 (GRKSRQRQ). 2 stretches are compositionally biased toward polar residues: residues 1242–1265 (QDVQ…LSKS) and 1373–1385 (QESA…LTSE). The segment covering 1535-1546 (SKTSPEAESGGT) has biased composition (polar residues).

Its subcellular location is the nucleus. The protein localises to the cytoplasm. It localises to the cytosol. Functionally, may act as the scaffold of a protein complex, which sequesters key factors that are required for the G2 to M transition in meristematic tissues. Together with REC2, REC3 and FMT/CLU, contributes to the establishment of the cellular volume devoted to the chloroplast compartment. The protein is Protein REDUCED CHLOROPLAST COVERAGE 3 of Arabidopsis thaliana (Mouse-ear cress).